The primary structure comprises 488 residues: 7,8-epoxymelianol synthase CYP88A51 (488 aa).

Residues 4–24 (NFLWPMLAMFLGSLVVMFGFL) traverse the membrane as a helical segment. Cys436 is a heme binding site.

It belongs to the cytochrome P450 family. It depends on heme as a cofactor. As to expression, accumulates in mature fruits and in juice vesicles.

It localises to the membrane. It catalyses the reaction melianol + reduced [NADPH--hemoprotein reductase] + O2 = 7,8-epoxymelianol + oxidized [NADPH--hemoprotein reductase] + H2O + H(+). Its pathway is secondary metabolite biosynthesis; terpenoid biosynthesis. Functionally, monooxygenase involved in the biosynthesis of limonoids triterpene natural products such as limonin, a compound with insecticidal activity responsible for the bitter taste in citrus. Catalyzes the epoxidation of melianol to produce 7,8-epoxymelianol. The protein is 7,8-epoxymelianol synthase CYP88A51 of Citrus sinensis (Sweet orange).